Reading from the N-terminus, the 1469-residue chain is Regulation of nuclear pre-mRNA domain-containing protein 2 (1469 aa).

Ala-2 bears the N-acetylalanine mark. Ser-16 is subject to Phosphoserine. The 131-residue stretch at 19–149 (SAGALESSLD…ALREALMDRA (131 aa)) folds into the CID domain. Disordered stretches follow at residues 329 to 445 (STLP…TAAP) and 489 to 524 (TGVS…PSHN). A compositionally biased stretch (basic and acidic residues) spans 370-386 (ESDKSATPEPVTDNRDV). Ser-374 is modified (phosphoserine). The residue at position 376 (Thr-376) is a Phosphothreonine. A compositionally biased stretch (acidic residues) spans 387–396 (EDMELSDVED). Ser-392 carries the post-translational modification Phosphoserine. Positions 397–412 (DGSKIIVEDRKEKPVE) are enriched in basic and acidic residues. Over residues 419-430 (GVPTKSTESVSK) the composition is skewed to polar residues. A compositionally biased stretch (pro residues) spans 434–445 (CAPPSVPTTAAP). Phosphoserine occurs at positions 492, 495, 498, and 504. Thr-536 carries the phosphothreonine modification. The segment at 572-594 (ASEVTSQSTTASPASTTGSAVKG) is disordered. Over residues 576-591 (TSQSTTASPASTTGSA) the composition is skewed to low complexity. Residues Ser-583 and Ser-612 each carry the phosphoserine modification. Thr-617 bears the Phosphothreonine mark. Residue Ser-633 is modified to Phosphoserine. The segment covering 647–656 (SLGFTGTHNP) has biased composition (polar residues). Disordered regions lie at residues 647–686 (SLGF…TSPS), 716–867 (SSAP…AMMN), 919–1013 (SENC…SGVE), 1033–1140 (KNAS…HGRE), 1154–1183 (SSFD…FKTT), 1204–1328 (FNST…PTPP), and 1368–1414 (GPGL…HRDA). 4 positions are modified to phosphoserine: Ser-682, Ser-684, Ser-735, and Ser-738. Thr-742 bears the Phosphothreonine mark. Ser-749 is subject to Phosphoserine. Residue Thr-751 is modified to Phosphothreonine. Polar residues predominate over residues 761 to 771 (PTSSSVDTMSL). Phosphoserine occurs at positions 777 and 781. Over residues 777–787 (SPGSSTPSSTR) the composition is skewed to low complexity. A Phosphothreonine modification is found at Thr-782. 5 positions are modified to phosphoserine: Ser-788, Ser-836, Ser-845, Ser-919, and Ser-947. Polar residues predominate over residues 959–982 (PDSNHSGLSQSTAGHLTLPQTQYP). A phosphoserine mark is found at Ser-984 and Ser-995. Over residues 1047–1073 (QTPNKGTSSDGVSLSNLTQPSLPTTDQ) the composition is skewed to polar residues. A phosphoserine mark is found at Ser-1086 and Ser-1117. The span at 1159 to 1168 (GPSSASELAS) shows a compositional bias: low complexity. Gly residues predominate over residues 1169–1178 (LGGGGSGGLT). Over residues 1272 to 1295 (GPPPPPGEHSGVPFPPPPPPPPPG) the composition is skewed to pro residues. Residue Arg-1375 is modified to Asymmetric dimethylarginine. Low complexity-rich tracts occupy residues 1377 to 1390 (SLSL…HLGP) and 1400 to 1409 (TSSSGLPLSP). Asymmetric dimethylarginine is present on residues Arg-1432 and Arg-1438.

In terms of assembly, associates with the RNA polymerase II complex.

The sequence is that of Regulation of nuclear pre-mRNA domain-containing protein 2 (Rprd2) from Mus musculus (Mouse).